The primary structure comprises 418 residues: Gamma-glutamyl phosphate reductase (418 aa).

This sequence belongs to the gamma-glutamyl phosphate reductase family.

The protein localises to the cytoplasm. It catalyses the reaction L-glutamate 5-semialdehyde + phosphate + NADP(+) = L-glutamyl 5-phosphate + NADPH + H(+). Its pathway is amino-acid biosynthesis; L-proline biosynthesis; L-glutamate 5-semialdehyde from L-glutamate: step 2/2. Its function is as follows. Catalyzes the NADPH-dependent reduction of L-glutamate 5-phosphate into L-glutamate 5-semialdehyde and phosphate. The product spontaneously undergoes cyclization to form 1-pyrroline-5-carboxylate. The sequence is that of Gamma-glutamyl phosphate reductase from Geobacter metallireducens (strain ATCC 53774 / DSM 7210 / GS-15).